We begin with the raw amino-acid sequence, 600 residues long: Pyranose dehydrogenase 3 (600 aa).

Positions 1 to 25 (MLPRVARLNTHLVSLALLGFQITYG) are cleaved as a signal peptide. N-linked (GlcNAc...) asparagine glycosylation is found at asparagine 99 and asparagine 114. Histidine 127 is modified (tele-8alpha-FAD histidine). N-linked (GlcNAc...) asparagine glycosylation is found at asparagine 173, asparagine 199, asparagine 275, asparagine 342, asparagine 399, and asparagine 507. Histidine 535 functions as the Proton acceptor in the catalytic mechanism. A glycan (N-linked (GlcNAc...) asparagine) is linked at asparagine 546. Histidine 579 is an active-site residue.

It belongs to the GMC oxidoreductase family. As to quaternary structure, monomer. FAD is required as a cofactor. N-glycosylated.

Its subcellular location is the secreted. The catalysed reaction is pyranose + acceptor = pyranos-2-ulose + reduced acceptor.. The enzyme catalyses pyranose + acceptor = pyranos-3-ulose + reduced acceptor.. It catalyses the reaction pyranose + acceptor = pyranos-2,3-diulose + reduced acceptor.. It carries out the reaction a pyranoside + acceptor = a pyranosid-3-ulose + reduced acceptor.. The catalysed reaction is a pyranoside + acceptor = a pyranosid-3,4-diulose + reduced acceptor.. Functionally, catalyzes the single-oxidation or sequential double oxidation reaction of carbohydrates primarily at carbon-2 and/or carbon-3 with the concomitant reduction of the flavin. The enzyme exhibits a broad sugar substrate specificity, oxidizing different aldopyranoses to the corresponding C-1, C-2, C-3 or C-1,2, C-2,3 and C-3,4 (di)dehydro sugars with substrate-specific regioselectivity. Accepts only a narrow range of electron acceptors such as substituted benzoquinones and complexed metal ions and reacts extremely slowly with O(2) as acceptor. May play a role in the natural recycling of plant matter by oxidizing all major monosaccharides in lignocellulose and by reducing quinone compounds or reactive radical species generated during lignin depolymerization. The polypeptide is Pyranose dehydrogenase 3 (Leucoagaricus meleagris (Western flat-topped agaric)).